We begin with the raw amino-acid sequence, 373 residues long: Probable G-protein coupled receptor 173 (373 aa).

The Extracellular portion of the chain corresponds to 1-26 (MANTTGEPEEVSGALSPPSAVAYVKL). N-linked (GlcNAc...) asparagine glycosylation is present at N3. A helical transmembrane segment spans residues 27 to 47 (VLLGLIMCVSLAGNAILSLLV). Topologically, residues 48 to 59 (LKDRALHKAPYY) are cytoplasmic. Residues 60-80 (FLLDLCLADGIRSAVCFPFVL) form a helical membrane-spanning segment. Residues 81 to 97 (ASVRHGSSWTFSALSCK) are Extracellular-facing. C96 and C174 are disulfide-bonded. A helical transmembrane segment spans residues 98–118 (IVAFMAVLFCFHAAFMLFCIS). The Cytoplasmic segment spans residues 119–139 (VTRYMAIAHHRFYAKRMTLWT). A helical transmembrane segment spans residues 140–160 (CAAVICMAWTLSVAMAFPPVF). Topologically, residues 161–188 (DVGTYKFIREEDQCIFEHRYFKANDTLG) are extracellular. N184 is a glycosylation site (N-linked (GlcNAc...) asparagine). A helical membrane pass occupies residues 189–209 (FMLMLAVLMAATHAVYGKLLL). Topologically, residues 210–287 (FEYRHRKMKP…VKGEKQLGRM (78 aa)) are cytoplasmic. A helical membrane pass occupies residues 288–308 (FYAITLLFLLLWSPYIVACYW). Residues 309 to 322 (RVFVKACAVPHRYL) are Extracellular-facing. Residues 323-343 (ATAVWMSFAQAAVNPIVCFLL) form a helical membrane-spanning segment. The Cytoplasmic portion of the chain corresponds to 344–373 (NKDLKKCLRTHAPCWGTGGAPAPREPYCVM).

Belongs to the G-protein coupled receptor 1 family.

The protein localises to the cell membrane. Is a receptor for the SMIM20 derived peptides Phoenixin-14 and Phoenixin-20. It mediates the Phoenixin-14 and Phoenixin-20 augmentation of gonadotropin-releasing hormone (GNRH) signaling in the hypothalamus and pituitary gland. In the ovary, it mediates the effects of Phoenixin-14 and Phoenixin-20 induced granulosa cell proliferation during follicular growth. This is Probable G-protein coupled receptor 173 (GPR173) from Bos taurus (Bovine).